The chain runs to 277 residues: Transcription factor HES-4-B (277 aa).

The tract at residues 1–44 is disordered; it reads MPADSMEKPTASPIAGAPANSAQTPDKPKSASEHRKSSKPIMEK. Over residues 26 to 35 the composition is skewed to basic and acidic residues; it reads DKPKSASEHR. The 58-residue stretch at 34–91 folds into the bHLH domain; it reads HRKSSKPIMEKRRRARINESLGQLKTLILDALKKDSSRHSKLEKADILEMTVKHLRNL. One can recognise an Orange domain in the interval 110–143; sequence YRAGFNECMNEVTRFLSTCEGVNTEVRTRLLGHL. The interval 258-277 is disordered; the sequence is VSPLGGSTRADSAESVWRPW. Residues 274–277 carry the WRPW motif motif; the sequence is WRPW.

In terms of assembly, transcription repression requires formation of a complex with a corepressor protein of the Groucho/TLE family. Interacts with the bHLH protein hes6; this interaction may inhibit the transcriptional repressor activity. Binds DNA in the form of a heterodimer with the bHLH protein hey1/hrt1. Interacts (via Orange domain) with id3 (via HLH domain). As to expression, dynamically expressed in the borders of several tissue territories. Expressed in the pre-placodal ectoderm (PPE) from gastrula stage. During gastrulation, expressed in the deep layer of the dorsal lip, the Spemann organizer and three distinct regions in the prospective neuroectoderm: neural plate border, presumptive floor plate/notoplate and anterior neural plate. At later stages, expression is localized to the anterior of the prechordal plate, the presomitic mesoderm, neural tube, neural crest derivatives and several tissues of the central nervous system, with expression in the developing floor plate continues to at least the tadpole stage. From the early tailbud stage, expressed in the dorsoanterior region of the developing pronephros. During early tailbud stages, broadly expressed within the pronephric mesoderm. and in the sensorial layer of the ectoderm covering the pronephros anlagen. During late tailbud to early tadpole stages, expressed in the ventral region of the pronephros. Expression remains in the proximal and distal tubules at late tadpole stages (stage 35).

Its subcellular location is the nucleus. In terms of biological role, transcriptional repressor. Binds DNA on N-box motifs: 5'-CACNAG-3'. Promotes floor plate development and prechordal plate development. Required for lens development as early as the stage of lens field formation, partly through regulation of gene expression of the cell cycle inhibitor cdknx/p27(xic1). Required for formation of the neural crest downstream of multiple signaling pathways, and acts at the neural plate border via both DNA-binding dependent and independent mechanisms; acts in a DNA-binding dependent manner to repress pro-apoptotic and neural crest differentiation genes, including id3, delta1, and cdknx/p27(xic1), and thus promote the cell survival of neural plate border cells and maintain them in an undifferentiated state. Represses transcription of id3, at least in part through the repression of bmp4. On the other hand, acts in a DNA-independent manner separate from the transcriptional repressor function, to stimulate cell proliferation and promote neural crest formation. Via this DNA-independent route, acts in neurulae upstream of stat3 to transiently up-regulate the notch ligand dll1/delta1, which in turn up-regulates id3 expression. Then interacts directly with id3, which blocks the transcriptional repressor function of hes4-B/hairy2b to allow the progression of neural crest progenitors through specification and differentiation. Also acts via repressor-dependent and repressor-independent mechanisms in early gastrulae to establish the prospective anterior prechordal mesoderm identity in the Spemann organizer; induces specific genes independently from direct transcriptional regulation, and represses the genes specific for neighboring tissues through direct transcriptional repression. Modulates lateral inhibition during notch signaling and regulates the cell context dependent effects of notch (which can have inhibitory, permissive or enhancing roles in muscle or neural differentiation). Inhibits myogenesis. This Xenopus laevis (African clawed frog) protein is Transcription factor HES-4-B (hes4-b).